The primary structure comprises 118 residues: Small ribosomal subunit protein uS13 (118 aa).

Residues 94 to 118 (GLPVRGQRTKTNARTRKGPRKPIKK) are disordered.

The protein belongs to the universal ribosomal protein uS13 family. Part of the 30S ribosomal subunit. Forms a loose heterodimer with protein S19. Forms two bridges to the 50S subunit in the 70S ribosome.

In terms of biological role, located at the top of the head of the 30S subunit, it contacts several helices of the 16S rRNA. In the 70S ribosome it contacts the 23S rRNA (bridge B1a) and protein L5 of the 50S subunit (bridge B1b), connecting the 2 subunits; these bridges are implicated in subunit movement. Contacts the tRNAs in the A and P-sites. The polypeptide is Small ribosomal subunit protein uS13 (Shigella dysenteriae serotype 1 (strain Sd197)).